A 574-amino-acid polypeptide reads, in one-letter code: Membrane protein insertase YidC (574 aa).

Residues 6-26 (VFLIFAWLMVAALLWMEWGKD) traverse the membrane as a helical segment. Residues 45–77 (RDPDAAAPSAANVPSAQPIPQAGAPGTVPATSS) are disordered. The next 5 membrane-spanning stretches (helical) occupy residues 356 to 376 (FSIMAIIGQGLFWVLSHLHSF), 380 to 400 (WGWAIIGLVVLLRLALYPLSA), 447 to 467 (GGCLPLLIQMPIFFALYWVLV), 489 to 509 (PYFILPLLNISIMWATQKLTP), and 525 to 545 (PLVFGVMMAFMPAGLVLYWVV).

Belongs to the OXA1/ALB3/YidC family. Type 1 subfamily. In terms of assembly, interacts with the Sec translocase complex via SecD. Specifically interacts with transmembrane segments of nascent integral membrane proteins during membrane integration.

The protein resides in the cell inner membrane. Its function is as follows. Required for the insertion and/or proper folding and/or complex formation of integral membrane proteins into the membrane. Involved in integration of membrane proteins that insert both dependently and independently of the Sec translocase complex, as well as at least some lipoproteins. Aids folding of multispanning membrane proteins. The protein is Membrane protein insertase YidC of Xanthomonas euvesicatoria pv. vesicatoria (strain 85-10) (Xanthomonas campestris pv. vesicatoria).